The following is a 416-amino-acid chain: MNKQSWLLNLSLLKTHPAFRAVFLARFISIVSLGLLGVAVPVQIQMMTHSTWQVGLSVTLTGGAMFVGLMVGGVLADRYERKKVILLARGTCGIGFIGLCLNALLPEPSLLAIYLLGLWDGFFASLGVTALLAATPALVGRENLMQAGAITMLTVRLGSVISPMIGGLLLATGGVAWNYGLAAAGTFITLLPLLSLPALPPPPQPREHPLKSLLAGFRFLLASPLVGGIALLGGLLTMASAVRVLYPALADNWQMSAAQIGFLYAAIPLGAAIGALTSGKLAHSARPGLLMLLSTLGSFLAIGLFGLMPMWILGVVCLALFGWLSAVSSLLQYTMLQTQTPEAMLGRINGLWTAQNVTGDAIGAALLGGLGAMMTPVASASASGFGLLIIGVLLLLVLVELRHFRQTPPQVTASDS.

Over 1–21 (MNKQSWLLNLSLLKTHPAFRA) the chain is Cytoplasmic. A helical transmembrane segment spans residues 22 to 42 (VFLARFISIVSLGLLGVAVPV). Residues 43 to 55 (QIQMMTHSTWQVG) are Periplasmic-facing. The helical transmembrane segment at 56 to 76 (LSVTLTGGAMFVGLMVGGVLA) threads the bilayer. The Cytoplasmic portion of the chain corresponds to 77 to 83 (DRYERKK). A helical membrane pass occupies residues 84–104 (VILLARGTCGIGFIGLCLNAL). Topologically, residues 105–109 (LPEPS) are periplasmic. Residues 110–130 (LLAIYLLGLWDGFFASLGVTA) traverse the membrane as a helical segment. Residues 131–156 (LLAATPALVGRENLMQAGAITMLTVR) are Cytoplasmic-facing. A helical transmembrane segment spans residues 157–177 (LGSVISPMIGGLLLATGGVAW). Position 178 (asparagine 178) is a topological domain, periplasmic. The chain crosses the membrane as a helical span at residues 179 to 199 (YGLAAAGTFITLLPLLSLPAL). Topologically, residues 200 to 218 (PPPPQPREHPLKSLLAGFR) are cytoplasmic. Residues 219–239 (FLLASPLVGGIALLGGLLTMA) form a helical membrane-spanning segment. The Periplasmic segment spans residues 240–256 (SAVRVLYPALADNWQMS). The chain crosses the membrane as a helical span at residues 257–277 (AAQIGFLYAAIPLGAAIGALT). Over 278-287 (SGKLAHSARP) the chain is Cytoplasmic. A helical transmembrane segment spans residues 288-307 (GLLMLLSTLGSFLAIGLFGL). Topologically, residues 308 to 313 (MPMWIL) are periplasmic. Residues 314–336 (GVVCLALFGWLSAVSSLLQYTML) traverse the membrane as a helical segment. Residues 337-356 (QTQTPEAMLGRINGLWTAQN) lie on the Cytoplasmic side of the membrane. Residues 357–377 (VTGDAIGAALLGGLGAMMTPV) traverse the membrane as a helical segment. Residue alanine 378 is a topological domain, periplasmic. The chain crosses the membrane as a helical span at residues 379 to 399 (SASASGFGLLIIGVLLLLVLV). Over 400 to 416 (ELRHFRQTPPQVTASDS) the chain is Cytoplasmic.

This sequence belongs to the major facilitator superfamily. EntS (TC 2.A.1.38) family.

It is found in the cell inner membrane. In terms of biological role, component of an export pathway for enterobactin. In Escherichia coli (strain K12 / MC4100 / BW2952), this protein is Enterobactin exporter EntS.